The following is a 177-amino-acid chain: ATP synthase subunit delta (177 aa).

Belongs to the ATPase delta chain family. As to quaternary structure, F-type ATPases have 2 components, F(1) - the catalytic core - and F(0) - the membrane proton channel. F(1) has five subunits: alpha(3), beta(3), gamma(1), delta(1), epsilon(1). F(0) has three main subunits: a(1), b(2) and c(10-14). The alpha and beta chains form an alternating ring which encloses part of the gamma chain. F(1) is attached to F(0) by a central stalk formed by the gamma and epsilon chains, while a peripheral stalk is formed by the delta and b chains.

It localises to the cell membrane. F(1)F(0) ATP synthase produces ATP from ADP in the presence of a proton or sodium gradient. F-type ATPases consist of two structural domains, F(1) containing the extramembraneous catalytic core and F(0) containing the membrane proton channel, linked together by a central stalk and a peripheral stalk. During catalysis, ATP synthesis in the catalytic domain of F(1) is coupled via a rotary mechanism of the central stalk subunits to proton translocation. Functionally, this protein is part of the stalk that links CF(0) to CF(1). It either transmits conformational changes from CF(0) to CF(1) or is implicated in proton conduction. The protein is ATP synthase subunit delta of Carboxydothermus hydrogenoformans (strain ATCC BAA-161 / DSM 6008 / Z-2901).